A 1089-amino-acid chain; its full sequence is Importin subunit beta-3 (1089 aa).

Ser2 is subject to N-acetylserine. 24 HEAT repeats span residues 6-39 (EEVNRTLLQIVQAFASPDNQIRSVAEKALSEEWI), 44-78 (IEYLLTFLAEQAAFSQDTTVAALSAVLFRKLALKA), 96-129 (KEVLAQIRSSLLKGFLSERADSIRHKLSDAIAEC), 138-165 (PELLQALIESLKSGNPNFRESSFRILTT), 175-207 (INSILPIFQSGFTDASDNVKIAAVTAFVGYFKQ), 216-252 (LGILLPSLLNSLPRFLDDGKDDALASVFESLIELVEL), 260-295 (MFDQIIQFTDMVIKNKDLEPPARTTALELLTVFSEN), 304-359 (QNYG…ALKL), 361-395 (GEYLAAPLFQYLQQMITSTEWRERFAAMMALSSAA), 399-439 (ADVL…STDF), 441-481 (PFIQ…FSEF), 484-524 (KDIL…AEAA), 526-568 (NKFI…GFAV), 571-613 (EKFH…CRIL), 615-689 (DDFV…ATLL), 692-735 (QFAV…LLAA), 742-781 (ELVLLWHKASSKLIGGLMSEPMPEITQVYHNSLVNGIKVM), 788-849 (EDQL…LKTT), 852-890 (HYLKNLENIWPMINTFLLDNEPILVIFALVVIGDLIQYG), 898-930 (KNAFIPKVTECLISPDARIRQAASYIIGVCAQY), 938-978 (VCIP…LYAY), 986-1017 (DTYTANWFKTLPTITDKEAASFNYQFLSQLIE), 1028-1063 (NISAVVDSVIQALNERSLTEREGQTVISSVKKLLGF), and 1066-1089 (SSDAMAIFNRYPADIMEKVHKWFA). Thr830 is subject to Phosphothreonine.

Belongs to the importin beta family. Importin beta-3 subfamily. As to quaternary structure, interacts with Ran (GSP1); interacts specifically with the GTP-bound form of Ran (GTP-Ran), protecting it from GTP hydrolysis and nucleotide exchange. Interacts with RPL25; this interaction is dissociated by binding to Ran-GTP. Interacts with YAP1; this interaction is dissociated by binding to Ran-GTP. Interacts with NOP1; via its rg-NLS. Interacts with SOF1; via its cNLS. Interacts with histones H3 and H4; via their NLS. Interacts with ABF1.

Its subcellular location is the cytoplasm. It localises to the nucleus. In terms of biological role, functions in nuclear protein import as nuclear transport receptor. Serves as receptor for classical and arginine/glycine-rich nuclear localization signals (cNLS and rg-NLS) in cargo substrates. Its predominant cargo substrate seems to be ribosomal proteins and ribosome biogenesis trans- and cis-acting factors. Required for nuclear transport of YAP1, NOP1 and SOF1. Mediates the nuclear import of histones H3 and H4. Mediates docking of the importin/substrate complex to the nuclear pore complex (NPC) through binding to repeat-containing nucleoporins. The complex is subsequently translocated through the pore by an energy requiring, Ran-dependent mechanism. At the nucleoplasmic side of the NPC, GTP-Ran binding leads to release of the cargo. The importin is re-exported from the nucleus to the cytoplasm where GTP hydrolysis releases Ran from importin. The directionality of nuclear import is thought to be conferred by an asymmetric distribution of the GTP- and GDP-bound forms of Ran between the cytoplasm and nucleus. Functionally, plays a role in protein secretion. In Saccharomyces cerevisiae (strain ATCC 204508 / S288c) (Baker's yeast), this protein is Importin subunit beta-3.